The primary structure comprises 357 residues: UDP-N-acetylglucosamine--N-acetylmuramyl-(pentapeptide) pyrophosphoryl-undecaprenol N-acetylglucosamine transferase (357 aa).

UDP-N-acetyl-alpha-D-glucosamine is bound by residues 14–16 (SGG), Asn-125, Ser-190, and Gln-290.

Belongs to the glycosyltransferase 28 family. MurG subfamily.

Its subcellular location is the cell inner membrane. It catalyses the reaction di-trans,octa-cis-undecaprenyl diphospho-N-acetyl-alpha-D-muramoyl-L-alanyl-D-glutamyl-meso-2,6-diaminopimeloyl-D-alanyl-D-alanine + UDP-N-acetyl-alpha-D-glucosamine = di-trans,octa-cis-undecaprenyl diphospho-[N-acetyl-alpha-D-glucosaminyl-(1-&gt;4)]-N-acetyl-alpha-D-muramoyl-L-alanyl-D-glutamyl-meso-2,6-diaminopimeloyl-D-alanyl-D-alanine + UDP + H(+). Its pathway is cell wall biogenesis; peptidoglycan biosynthesis. Its function is as follows. Cell wall formation. Catalyzes the transfer of a GlcNAc subunit on undecaprenyl-pyrophosphoryl-MurNAc-pentapeptide (lipid intermediate I) to form undecaprenyl-pyrophosphoryl-MurNAc-(pentapeptide)GlcNAc (lipid intermediate II). The polypeptide is UDP-N-acetylglucosamine--N-acetylmuramyl-(pentapeptide) pyrophosphoryl-undecaprenol N-acetylglucosamine transferase (Chlamydia felis (strain Fe/C-56) (Chlamydophila felis)).